The primary structure comprises 428 residues: Enolase (428 aa).

Residue Gln163 participates in (2R)-2-phosphoglycerate binding. Glu205 serves as the catalytic Proton donor. 3 residues coordinate Mg(2+): Asp242, Glu285, and Asp312. The (2R)-2-phosphoglycerate site is built by Lys337, Arg366, Ser367, and Lys388. Lys337 functions as the Proton acceptor in the catalytic mechanism.

Belongs to the enolase family. The cofactor is Mg(2+).

The protein localises to the cytoplasm. The protein resides in the secreted. It localises to the cell surface. It catalyses the reaction (2R)-2-phosphoglycerate = phosphoenolpyruvate + H2O. The protein operates within carbohydrate degradation; glycolysis; pyruvate from D-glyceraldehyde 3-phosphate: step 4/5. In terms of biological role, catalyzes the reversible conversion of 2-phosphoglycerate (2-PG) into phosphoenolpyruvate (PEP). It is essential for the degradation of carbohydrates via glycolysis. The chain is Enolase from Moorella thermoacetica (strain ATCC 39073 / JCM 9320).